Reading from the N-terminus, the 224-residue chain is Ribose-5-phosphate isomerase A (224 aa).

Substrate is bound by residues 26–29, 81–84, and 94–97; these read TGST, DGAD, and KGGG. Residue Glu-103 is the Proton acceptor of the active site. Substrate is bound at residue Lys-121.

Belongs to the ribose 5-phosphate isomerase family. Homodimer.

The enzyme catalyses aldehydo-D-ribose 5-phosphate = D-ribulose 5-phosphate. It participates in carbohydrate degradation; pentose phosphate pathway; D-ribose 5-phosphate from D-ribulose 5-phosphate (non-oxidative stage): step 1/1. Its function is as follows. Catalyzes the reversible conversion of ribose-5-phosphate to ribulose 5-phosphate. This Listeria innocua serovar 6a (strain ATCC BAA-680 / CLIP 11262) protein is Ribose-5-phosphate isomerase A.